We begin with the raw amino-acid sequence, 218 residues long: MSLAEFDELRWDHSCDRLDVPSNYLKRKARKTPGGLEELRKSMTSATIYVGNLSFYTSEEQLYELFSKCGSIEKIIMGLDRFKFTPCGFCFIIYQTPQEALAALKYLSKTKLDDREITIDLDPGFEEGRQFGRGKNGGQVSDELRFEFDASRGGFYVPLENRIGAVNHFGARRIRDPHKNHHHHHHGHHHHHGQPHAAAAKVNPMEVEEELDSYIPGQ.

MRNA contacts are provided by residues Tyr24, Tyr49, 118–122 (TIDLD), 129–133 (RQFGR), and 139–140 (QV). Residues 46–124 (ATIYVGNLSF…REITIDLDPG (79 aa)) enclose the RRM domain. Over residues 176–194 (DPHKNHHHHHHGHHHHHGQ) the composition is skewed to basic residues. Residues 176 to 200 (DPHKNHHHHHHGHHHHHGQPHAAAA) are disordered.

This sequence belongs to the RRM NCBP2 family. As to quaternary structure, component of the nuclear cap-binding complex (CBC).

Its subcellular location is the nucleus. Component of the cap-binding complex (CBC) involved in the nuclear export of capped U snRNAs. The CBC complex is required for efficient pre-mRNA splicing through efficient commitment complex and spliceosome formation; and involved in rRNA processing at sites A0, A1 and A2. This is Nuclear cap-binding protein subunit 2 (CBC2) from Eremothecium gossypii (strain ATCC 10895 / CBS 109.51 / FGSC 9923 / NRRL Y-1056) (Yeast).